The following is a 1745-amino-acid chain: Collagen alpha-3(V) chain (1745 aa).

The first 29 residues, 1–29 (MGNRRDLGQPRAGLCLLLAALQLLPGTQA), serve as a signal peptide directing secretion. One can recognise a Laminin G-like domain in the interval 62–224 (DRAFRIGQAS…QACERYLPDC (163 aa)). N-linked (GlcNAc...) asparagine glycans are attached at residues N102 and N141. The tract at residues 211 to 391 (QAAFQACERY…AVIEKGQQFE (181 aa)) is nonhelical region. Disordered stretches follow at residues 230-304 (AATV…TPTP), 322-362 (RSLD…EYPS), 387-439 (GQQF…RGPP), and 476-1492 (SMKG…PAEL). Over residues 244–267 (PRRKGKGKGRKKGRGRKGKGRKKN) the composition is skewed to basic residues. An O-linked (Xyl...) (chondroitin sulfate) serine glycan is attached at S349. Collagen-like domains are found at residues 391-440 (EGPP…GPPG) and 482-538 (GPVG…DGAR). A triple-helical region region spans residues 392-1489 (GPPGAPGPQG…AGPPGPPGAP (1098 aa)). The span at 406–424 (SGPPGPPGFPGDPGPPGPA) shows a compositional bias: pro residues. Low complexity-rich tracts occupy residues 426–439 (LPGI…RGPP), 489–499 (RPGPVGLPGHP), and 597–619 (EPGP…PGVT). Basic and acidic residues predominate over residues 724 to 733 (QGEKGEKGED). The span at 765-792 (PKGQAGQAGEEGPPGSAGEKGKLGVPGL) shows a compositional bias: low complexity. Collagen-like domains lie at 824-877 (GQPG…QGPP), 905-950 (GFQG…GLPG), and 951-989 (LEGR…GDPG). Residues 967-979 (LGKEGPAGLRGFP) show a composition bias toward low complexity. Gly residues predominate over residues 1016 to 1025 (GPAGGIGLPG). 2 stretches are compositionally biased toward low complexity: residues 1116–1126 (ADGAQGRRGPP) and 1141–1152 (VGVIGPPGLQGL). Gly residues predominate over residues 1190-1199 (GLPGGVGQPG). Pro residues predominate over residues 1213–1222 (PGPPGAPGIP). The span at 1234 to 1243 (SGPSGAAGPP) shows a compositional bias: low complexity. A compositionally biased stretch (basic and acidic residues) spans 1318 to 1330 (MGREGREGEKGAK). Residues 1405–1416 (IGLIGLIGPPGE) are compositionally biased toward low complexity. The segment covering 1429–1443 (QGPPGPKGDPGPPGP) has biased composition (pro residues). Residues 1430–1488 (GPPGPKGDPGPPGPIGSLGHPGPPGVAGPLGQKGSKGSPGSMGPRGDTGPAGPPGPPGA) form the Collagen-like 6 domain. Residues 1458 to 1479 (PLGQKGSKGSPGSMGPRGDTGP) show a composition bias toward low complexity. A Fibrillar collagen NC1 domain is found at 1514–1744 (EEVLASLTSL…GFELGPVCFS (231 aa)). 2 disulfides stabilise this stretch: C1585–C1742 and C1651–C1696.

This sequence belongs to the fibrillar collagen family. Trimers of two alpha 1(V) and one alpha 2(V) chains in most tissues and trimers of one alpha 1(V), one alpha 2(V), and one alpha 3(V) chains in placenta. In terms of processing, prolines at the third position of the tripeptide repeating unit (G-X-Y) are hydroxylated in some or all of the chains. In terms of tissue distribution, detected in fibroblasts (at protein level). Detected in urine (at protein level).

Its subcellular location is the secreted. It localises to the extracellular space. It is found in the extracellular matrix. Its function is as follows. Type V collagen is a member of group I collagen (fibrillar forming collagen). It is a minor connective tissue component of nearly ubiquitous distribution. Type V collagen binds to DNA, heparan sulfate, thrombospondin, heparin, and insulin. The chain is Collagen alpha-3(V) chain (COL5A3) from Homo sapiens (Human).